The following is a 220-amino-acid chain: Fructose-6-phosphate aldolase (220 aa).

K85 functions as the Schiff-base intermediate with substrate in the catalytic mechanism.

Belongs to the transaldolase family. Type 3A subfamily. Homodecamer.

It localises to the cytoplasm. It carries out the reaction beta-D-fructose 6-phosphate = dihydroxyacetone + D-glyceraldehyde 3-phosphate. Functionally, catalyzes the reversible formation of fructose 6-phosphate from dihydroxyacetone and D-glyceraldehyde 3-phosphate via an aldolization reaction. This is Fructose-6-phosphate aldolase from Salmonella choleraesuis (strain SC-B67).